The primary structure comprises 169 residues: Short form salivary protein D7R3 (169 aa).

An N-terminal signal peptide occupies residues 1–21; the sequence is MFGKLLPCAILVWCLFSLGQA. 3 disulfide bridges follow: cysteine 30–cysteine 62, cysteine 43–cysteine 168, and cysteine 101–cysteine 120. The noradrenaline site is built by glutamate 31 and arginine 46. Glutamate 31 is a binding site for serotonin. Histidine 59, tyrosine 118, aspartate 135, and glutamate 138 together coordinate serotonin. Histamine is bound by residues tyrosine 118, aspartate 135, and glutamate 138. The noradrenaline site is built by aspartate 135 and glutamate 138.

Belongs to the PBP/GOBP family. Female saliva (at protein level). Female salivary gland. Low-level expression in female carcass without salivary glands. Not detected in male tissues.

The protein resides in the secreted. Its function is as follows. Modulates blood feeding of female mosquitoes on vertebrate species by binding and sequestering different mediators involved in the host response. Binds serotonin, noradrenaline, histamine and adrenaline. Inhibits histamine-, serotonin- and noradrenaline-induced smooth muscle contraction. Exhibits vasodilating activity. The sequence is that of Short form salivary protein D7R3 from Anopheles gambiae (African malaria mosquito).